The primary structure comprises 88 residues: Beta-insect excitatory toxin 2 (88 aa).

The first 18 residues, 1-18 (MKFLLLFLVVLPIMGVLG), serve as a signal peptide directing secretion. The 64-residue stretch at 20–83 (KNGYAVDSSG…ISDTRKSYCD (64 aa)) folds into the LCN-type CS-alpha/beta domain. Cystine bridges form between Cys34/Cys55, Cys40/Cys60, Cys44/Cys62, and Cys56/Cys82.

This sequence belongs to the long (4 C-C) scorpion toxin superfamily. Sodium channel inhibitor family. Beta subfamily. In terms of tissue distribution, expressed by the venom gland.

The protein localises to the secreted. Excitatory insect beta-toxins induce a spastic paralysis. They bind voltage-independently at site-4 of sodium channels (Nav) and shift the voltage of activation toward more negative potentials thereby affecting sodium channel activation and promoting spontaneous and repetitive firing. This toxin is active only on insects. In Androctonus australis (Sahara scorpion), this protein is Beta-insect excitatory toxin 2.